Consider the following 354-residue polypeptide: tRNA-specific 2-thiouridylase MnmA (354 aa).

Residues 6–13 (LLSGGVDS) and leucine 33 contribute to the ATP site. Cysteine 100 acts as the Nucleophile in catalysis. The cysteines at positions 100 and 195 are disulfide-linked. Glycine 123 serves as a coordination point for ATP. An interaction with tRNA region spans residues 145 to 147 (KDQ). Residue cysteine 195 is the Cysteine persulfide intermediate of the active site.

This sequence belongs to the MnmA/TRMU family.

It is found in the cytoplasm. The catalysed reaction is S-sulfanyl-L-cysteinyl-[protein] + uridine(34) in tRNA + AH2 + ATP = 2-thiouridine(34) in tRNA + L-cysteinyl-[protein] + A + AMP + diphosphate + H(+). Its function is as follows. Catalyzes the 2-thiolation of uridine at the wobble position (U34) of tRNA, leading to the formation of s(2)U34. This chain is tRNA-specific 2-thiouridylase MnmA, found in Borrelia recurrentis (strain A1).